The chain runs to 197 residues: NADH-quinone oxidoreductase subunit B (197 aa).

Residues cysteine 76, cysteine 77, cysteine 141, and cysteine 171 each coordinate [4Fe-4S] cluster.

The protein belongs to the complex I 20 kDa subunit family. In terms of assembly, NDH-1 is composed of 14 different subunits. Subunits NuoB, C, D, E, F, and G constitute the peripheral sector of the complex. [4Fe-4S] cluster serves as cofactor.

The protein localises to the cell inner membrane. The enzyme catalyses a quinone + NADH + 5 H(+)(in) = a quinol + NAD(+) + 4 H(+)(out). In terms of biological role, NDH-1 shuttles electrons from NADH, via FMN and iron-sulfur (Fe-S) centers, to quinones in the respiratory chain. The immediate electron acceptor for the enzyme in this species is believed to be ubiquinone. Couples the redox reaction to proton translocation (for every two electrons transferred, four hydrogen ions are translocated across the cytoplasmic membrane), and thus conserves the redox energy in a proton gradient. In Methylobacterium nodulans (strain LMG 21967 / CNCM I-2342 / ORS 2060), this protein is NADH-quinone oxidoreductase subunit B.